The following is an 871-amino-acid chain: DNA mismatch repair protein MutS (871 aa).

Residue 617-624 (GPNMGGKS) participates in ATP binding.

Belongs to the DNA mismatch repair MutS family.

This protein is involved in the repair of mismatches in DNA. It is possible that it carries out the mismatch recognition step. This protein has a weak ATPase activity. This Hydrogenovibrio crunogenus (strain DSM 25203 / XCL-2) (Thiomicrospira crunogena) protein is DNA mismatch repair protein MutS.